The primary structure comprises 668 residues: DNA ligase (668 aa).

Residues 34 to 38 (DTEYD), 83 to 84 (SL), and glutamate 114 each bind NAD(+). Catalysis depends on lysine 116, which acts as the N6-AMP-lysine intermediate. The NAD(+) site is built by arginine 137, glutamate 171, lysine 286, and lysine 310. Positions 404, 407, 422, and 427 each coordinate Zn(2+). The region spanning 588–668 (NSDSIIANKT…FFDLLKSEKG (81 aa)) is the BRCT domain.

It belongs to the NAD-dependent DNA ligase family. LigA subfamily. Mg(2+) is required as a cofactor. The cofactor is Mn(2+).

It catalyses the reaction NAD(+) + (deoxyribonucleotide)n-3'-hydroxyl + 5'-phospho-(deoxyribonucleotide)m = (deoxyribonucleotide)n+m + AMP + beta-nicotinamide D-nucleotide.. Its function is as follows. DNA ligase that catalyzes the formation of phosphodiester linkages between 5'-phosphoryl and 3'-hydroxyl groups in double-stranded DNA using NAD as a coenzyme and as the energy source for the reaction. It is essential for DNA replication and repair of damaged DNA. The sequence is that of DNA ligase from Mycoplasma capricolum subsp. capricolum (strain California kid / ATCC 27343 / NCTC 10154).